The following is a 61-amino-acid chain: Insect toxin LqhIT5 (61 aa).

Residues 1-61 (DGYIRGGDGC…EWKYETNTCG (61 aa)) form the LCN-type CS-alpha/beta domain. 4 disulfide bridges follow: Cys-10–Cys-60, Cys-14–Cys-35, Cys-21–Cys-42, and Cys-25–Cys-44.

Belongs to the long (4 C-C) scorpion toxin superfamily. Sodium channel inhibitor family. Beta subfamily. Expressed by the venom gland.

It is found in the secreted. Functionally, excitatory insect beta-toxins induce a spastic paralysis. They bind voltage-independently at site-4 of sodium channels (Nav) and shift the voltage of activation toward more negative potentials thereby affecting sodium channel activation and promoting spontaneous and repetitive firing. This toxin is active only on insects. It operates by inducing a fast contraction paralysis without depressant activity. It is more similar to the excitatory toxins in its mode of action and the depressant toxins in its primary structure. This chain is Insect toxin LqhIT5, found in Leiurus hebraeus (Hebrew deathstalker scorpion).